The chain runs to 324 residues: Beta-ketoacyl-[acyl-carrier-protein] synthase III (324 aa).

Residues cysteine 112 and histidine 249 contribute to the active site. An ACP-binding region spans residues glutamine 250–arginine 254. The active site involves asparagine 279.

Belongs to the thiolase-like superfamily. FabH family. As to quaternary structure, homodimer.

It is found in the cytoplasm. The enzyme catalyses malonyl-[ACP] + acetyl-CoA + H(+) = 3-oxobutanoyl-[ACP] + CO2 + CoA. It participates in lipid metabolism; fatty acid biosynthesis. Its function is as follows. Catalyzes the condensation reaction of fatty acid synthesis by the addition to an acyl acceptor of two carbons from malonyl-ACP. Catalyzes the first condensation reaction which initiates fatty acid synthesis and may therefore play a role in governing the total rate of fatty acid production. Possesses both acetoacetyl-ACP synthase and acetyl transacylase activities. Its substrate specificity determines the biosynthesis of branched-chain and/or straight-chain of fatty acids. The polypeptide is Beta-ketoacyl-[acyl-carrier-protein] synthase III (Streptococcus pyogenes serotype M49 (strain NZ131)).